Here is an 85-residue protein sequence, read N- to C-terminus: Transcriptional repressor protein KorC (85 aa).

A DNA-binding region (H-T-H motif) is located at residues 28–47 (EVLRLAGLTGGKAAKVLGLG).

In terms of biological role, acts with KorA as corepressor in the control of the kilC and kilE operons. The polypeptide is Transcriptional repressor protein KorC (korC) (Escherichia coli).